Consider the following 920-residue polypeptide: Valine--tRNA ligase (920 aa).

A 'HIGH' region motif is present at residues 40–50; sequence PNVTGTLHMGH. The 'KMSKS' region motif lies at 522-526; it reads KMSKS. Residue lysine 525 coordinates ATP. Coiled-coil stretches lie at residues 642-668 and 849-920; these read EWIRTRLQQTIKNAEEALSQYRFDLLA and AGVI…IESL.

The protein belongs to the class-I aminoacyl-tRNA synthetase family. ValS type 1 subfamily. In terms of assembly, monomer.

It localises to the cytoplasm. The enzyme catalyses tRNA(Val) + L-valine + ATP = L-valyl-tRNA(Val) + AMP + diphosphate. Functionally, catalyzes the attachment of valine to tRNA(Val). As ValRS can inadvertently accommodate and process structurally similar amino acids such as threonine, to avoid such errors, it has a 'posttransfer' editing activity that hydrolyzes mischarged Thr-tRNA(Val) in a tRNA-dependent manner. In Coxiella burnetii (strain RSA 493 / Nine Mile phase I), this protein is Valine--tRNA ligase.